Consider the following 313-residue polypeptide: B3 domain-containing transcription factor FUS3 (313 aa).

Residues 92–194 (FQKELKNSDV…NYVIQARKAS (103 aa)) constitute a DNA-binding region (TF-B3).

Interacts with KIN10. Post-translationally, phosphorylation by KIN10 increases its stability. Phosphorylated at one or more of the Ser-55, Ser-56 and/or Ser-57 residues. As to expression, expressed in cotyledons and hypocotyls.

The protein resides in the nucleus. Phosphorylation by KIN10 is required to positively regulates embryogenesis, seed yield, and plant growth at high temperature. Its function is as follows. Transcription regulator involved in gene regulation during late embryogenesis. Its expression to the epidermis is sufficient to control foliar organ identity by regulating positively the synthesis abscisic acid (ABA) and negatively gibberellin production. Negatively regulates TTG1 in the embryo. Positively regulates the abundance of the ABI3 protein in the seed. Cooperates with KIN10 to regulate developmental phase transitions and lateral organ development and act both as positive regulators of abscisic acid (ABA) signaling during germination. This chain is B3 domain-containing transcription factor FUS3 (FUS3), found in Arabidopsis thaliana (Mouse-ear cress).